The chain runs to 291 residues: Ajmaline N-methyltransferase (291 aa).

An SAM motif I region spans residues 71 to 80 (MLDVGCGIGG). The Vacuolar targeting signal motif lies at 133–139 (DGAFDLV). The SAM motif II stretch occupies residues 134–142 (GAFDLVLSI). Positions 161–170 (VAASGATIII) are SAM motif III.

Belongs to the class I-like SAM-binding methyltransferase superfamily. gTMT family. In terms of assembly, homodimer. As to expression, mainly expressed in roots, but barely detectable in stems and flowers.

The protein localises to the vacuole membrane. The enzyme catalyses ajmaline + S-adenosyl-L-methionine = 4-methylajmaline + S-adenosyl-L-homocysteine + H(+). It carries out the reaction norajmaline + S-adenosyl-L-methionine = 4-methylnorajmaline + S-adenosyl-L-homocysteine + H(+). Its pathway is alkaloid biosynthesis; ajmaline biosynthesis. Functionally, N-methyltransferase involved in the biosynthesis of ajmaline-type monoterpenoid indole alkaloids (MIAs) natural products, important plant-derived pharmaceuticals used in the therapy of heart disorders. Catalyzes the indole N-methylation of ajmaline to produce 4-methylajmaline. Also able, with a lower efficiency, to mediates the conversion of norajmaline to 4-methylnorajmaline. The sequence is that of Ajmaline N-methyltransferase from Rauvolfia serpentina (Serpentine wood).